We begin with the raw amino-acid sequence, 447 residues long: Methylenetetrahydrofolate--tRNA-(uracil-5-)-methyltransferase TrmFO (447 aa).

10-15 contacts FAD; that stretch reads GAGLAG.

This sequence belongs to the MnmG family. TrmFO subfamily. The cofactor is FAD.

It localises to the cytoplasm. The enzyme catalyses uridine(54) in tRNA + (6R)-5,10-methylene-5,6,7,8-tetrahydrofolate + NADH + H(+) = 5-methyluridine(54) in tRNA + (6S)-5,6,7,8-tetrahydrofolate + NAD(+). The catalysed reaction is uridine(54) in tRNA + (6R)-5,10-methylene-5,6,7,8-tetrahydrofolate + NADPH + H(+) = 5-methyluridine(54) in tRNA + (6S)-5,6,7,8-tetrahydrofolate + NADP(+). Catalyzes the folate-dependent formation of 5-methyl-uridine at position 54 (M-5-U54) in all tRNAs. This chain is Methylenetetrahydrofolate--tRNA-(uracil-5-)-methyltransferase TrmFO, found in Symbiobacterium thermophilum (strain DSM 24528 / JCM 14929 / IAM 14863 / T).